The sequence spans 204 residues: Methylthioribulose-1-phosphate dehydratase (204 aa).

Residues His94 and His96 each coordinate Zn(2+).

Belongs to the aldolase class II family. MtnB subfamily. Requires Zn(2+) as cofactor.

It carries out the reaction 5-(methylsulfanyl)-D-ribulose 1-phosphate = 5-methylsulfanyl-2,3-dioxopentyl phosphate + H2O. It functions in the pathway amino-acid biosynthesis; L-methionine biosynthesis via salvage pathway; L-methionine from S-methyl-5-thio-alpha-D-ribose 1-phosphate: step 2/6. In terms of biological role, catalyzes the dehydration of methylthioribulose-1-phosphate (MTRu-1-P) into 2,3-diketo-5-methylthiopentyl-1-phosphate (DK-MTP-1-P). The protein is Methylthioribulose-1-phosphate dehydratase of Citrobacter koseri (strain ATCC BAA-895 / CDC 4225-83 / SGSC4696).